We begin with the raw amino-acid sequence, 487 residues long: Sensor protein CseC (487 aa).

Residues 1-11 (MRGNLRRPGPA) are compositionally biased toward low complexity. Residues 1 to 41 (MRGNLRRPGPAGTAGPGRTGIRTSADGGRARPRTGAGTGVR) form a disordered region. 2 consecutive transmembrane segments (helical) span residues 63–83 (ISAA…LVVH) and 185–205 (ALII…VLIG). In terms of domain architecture, HAMP spans 206 to 262 (GQLSRRLRKAAAAANQVAQGERDVRVRDAIGGVVRDETDDLARAVDAMADALQQRIE). The 203-residue stretch at 270 to 472 (DIAHELRTPV…VAVLWLPEHA (203 aa)) folds into the Histidine kinase domain. A Phosphohistidine; by autocatalysis modification is found at His273.

It localises to the cell membrane. The enzyme catalyses ATP + protein L-histidine = ADP + protein N-phospho-L-histidine.. This is Sensor protein CseC (cseC) from Streptomyces avermitilis (strain ATCC 31267 / DSM 46492 / JCM 5070 / NBRC 14893 / NCIMB 12804 / NRRL 8165 / MA-4680).